A 443-amino-acid polypeptide reads, in one-letter code: Mitochondrial distribution and morphology protein 10 (443 aa).

The protein belongs to the MDM10 family. In terms of assembly, component of the ER-mitochondria encounter structure (ERMES) or MDM complex, composed of MMM1, MDM10, MDM12 and MDM34. Associates with the mitochondrial outer membrane sorting assembly machinery SAM(core) complex.

It localises to the mitochondrion outer membrane. Functionally, component of the ERMES/MDM complex, which serves as a molecular tether to connect the endoplasmic reticulum and mitochondria. Components of this complex are involved in the control of mitochondrial shape and protein biogenesis and may function in phospholipid exchange. MDM10 is involved in the late assembly steps of the general translocase of the mitochondrial outer membrane (TOM complex). Functions in the TOM40-specific route of the assembly of outer membrane beta-barrel proteins, including the association of TOM40 with the receptor TOM22 and small TOM proteins. Can associate with the SAM(core) complex as well as the MDM12-MMM1 complex, both involved in late steps of the major beta-barrel assembly pathway, that is responsible for biogenesis of all outer membrane beta-barrel proteins. May act as a switch that shuttles between both complexes and channels precursor proteins into the TOM40-specific pathway. Plays a role in mitochondrial morphology and in the inheritance of mitochondria. In Pyricularia oryzae (strain 70-15 / ATCC MYA-4617 / FGSC 8958) (Rice blast fungus), this protein is Mitochondrial distribution and morphology protein 10.